The chain runs to 294 residues: ATP synthase gamma chain (294 aa).

It belongs to the ATPase gamma chain family. As to quaternary structure, F-type ATPases have 2 components, CF(1) - the catalytic core - and CF(0) - the membrane proton channel. CF(1) has five subunits: alpha(3), beta(3), gamma(1), delta(1), epsilon(1). CF(0) has three main subunits: a, b and c.

It is found in the cell inner membrane. Produces ATP from ADP in the presence of a proton gradient across the membrane. The gamma chain is believed to be important in regulating ATPase activity and the flow of protons through the CF(0) complex. In Paramagnetospirillum magneticum (strain ATCC 700264 / AMB-1) (Magnetospirillum magneticum), this protein is ATP synthase gamma chain.